Reading from the N-terminus, the 529-residue chain is Type I restriction enzyme StySPI methylase subunit (529 aa).

S-adenosyl-L-methionine contacts are provided by residues 148-153 (QYFTPR), 178-180 (TAG), and E216. Residues 424–443 (AEESEVADSEENKNADQHQA) form a disordered region.

Belongs to the N(4)/N(6)-methyltransferase family. In terms of assembly, the type I restriction/modification system is composed of three polypeptides R, M and S; the restriction enzyme has stoichiometry R(2)M(2)S(1) while the methyltransferase is M(2)S(1).

It carries out the reaction a 2'-deoxyadenosine in DNA + S-adenosyl-L-methionine = an N(6)-methyl-2'-deoxyadenosine in DNA + S-adenosyl-L-homocysteine + H(+). Its function is as follows. The subtype gamma methyltransferase (M) subunit of a type I restriction enzyme. The M and S subunits together form a methyltransferase (MTase) that methylates A-2 on the top strand and A-3 on the bottom strand of the sequence 5'-AACN(6)GTRC-3'. In the presence of the R subunit the complex can also act as an endonuclease, binding to the same target sequence but cutting the DNA some distance from this site. Whether the DNA is cut or modified depends on the methylation state of the target sequence. When the target site is unmodified, the DNA is cut. When the target site is hemimethylated, the complex acts as a maintenance MTase modifying the DNA so that both strands become methylated. After locating a non-methylated recognition site, the enzyme complex serves as a molecular motor that translocates DNA in an ATP-dependent manner until a collision occurs that triggers cleavage. This Salmonella potsdam protein is Type I restriction enzyme StySPI methylase subunit.